Reading from the N-terminus, the 674-residue chain is UvrABC system protein B (674 aa).

The region spanning 26–414 (EGLDSGLAHQ…SGNDIAEQVV (389 aa)) is the Helicase ATP-binding domain. 39–46 (GVTGSGKT) is an ATP binding site. The Beta-hairpin motif lies at 92–115 (YYDYYQPEAYVPTTDTFIEKDASV). The Helicase C-terminal domain maps to 432-586 (QVDDLLSEIR…ALHNKKNGIT (155 aa)). The UVR domain maps to 634–669 (ELEIQRLETEMYDLAQNLEFEKAAEARDKIHTLRQQ).

The protein belongs to the UvrB family. As to quaternary structure, forms a heterotetramer with UvrA during the search for lesions. Interacts with UvrC in an incision complex.

It is found in the cytoplasm. Functionally, the UvrABC repair system catalyzes the recognition and processing of DNA lesions. A damage recognition complex composed of 2 UvrA and 2 UvrB subunits scans DNA for abnormalities. Upon binding of the UvrA(2)B(2) complex to a putative damaged site, the DNA wraps around one UvrB monomer. DNA wrap is dependent on ATP binding by UvrB and probably causes local melting of the DNA helix, facilitating insertion of UvrB beta-hairpin between the DNA strands. Then UvrB probes one DNA strand for the presence of a lesion. If a lesion is found the UvrA subunits dissociate and the UvrB-DNA preincision complex is formed. This complex is subsequently bound by UvrC and the second UvrB is released. If no lesion is found, the DNA wraps around the other UvrB subunit that will check the other stand for damage. This is UvrABC system protein B from Photobacterium profundum (strain SS9).